The following is a 153-amino-acid chain: Acetylacetone-cleaving enzyme (153 aa).

In terms of assembly, homotetramer. Fe cation is required as a cofactor.

It catalyses the reaction acetylacetone + O2 = methylglyoxal + acetate + H(+). It functions in the pathway xenobiotic degradation; acetylacetone degradation. Its function is as follows. Cleaves acetylacetone to equimolar amounts of methylglyoxal and acetate, consuming one equivalent of molecular oxygen. This chain is Acetylacetone-cleaving enzyme (dke1), found in Acinetobacter johnsonii.